A 184-amino-acid chain; its full sequence is Photosystem I assembly protein Ycf4 (184 aa).

The next 2 membrane-spanning stretches (helical) occupy residues 22–42 (FCWAIILFLGSLGFLLVGTSS) and 57–77 (IVFFPQGIVMSFYGIAGLFIS).

This sequence belongs to the Ycf4 family.

It is found in the plastid. The protein resides in the chloroplast thylakoid membrane. Functionally, seems to be required for the assembly of the photosystem I complex. This is Photosystem I assembly protein Ycf4 from Helianthus annuus (Common sunflower).